The following is a 358-amino-acid chain: 4-hydroxy-3-methylbut-2-en-1-yl diphosphate synthase (flavodoxin) (358 aa).

Residues C270, C273, C305, and E312 each contribute to the [4Fe-4S] cluster site.

It belongs to the IspG family. The cofactor is [4Fe-4S] cluster.

It carries out the reaction (2E)-4-hydroxy-3-methylbut-2-enyl diphosphate + oxidized [flavodoxin] + H2O + 2 H(+) = 2-C-methyl-D-erythritol 2,4-cyclic diphosphate + reduced [flavodoxin]. It participates in isoprenoid biosynthesis; isopentenyl diphosphate biosynthesis via DXP pathway; isopentenyl diphosphate from 1-deoxy-D-xylulose 5-phosphate: step 5/6. In terms of biological role, converts 2C-methyl-D-erythritol 2,4-cyclodiphosphate (ME-2,4cPP) into 1-hydroxy-2-methyl-2-(E)-butenyl 4-diphosphate. The sequence is that of 4-hydroxy-3-methylbut-2-en-1-yl diphosphate synthase (flavodoxin) from Ruthia magnifica subsp. Calyptogena magnifica.